The following is a 345-amino-acid chain: Heat-inducible transcription repressor HrcA (345 aa).

It belongs to the HrcA family.

Its function is as follows. Negative regulator of class I heat shock genes (grpE-dnaK-dnaJ and groELS operons). Prevents heat-shock induction of these operons. This chain is Heat-inducible transcription repressor HrcA, found in Zymomonas mobilis subsp. mobilis (strain ATCC 31821 / ZM4 / CP4).